The sequence spans 180 residues: Type-1 fimbrial protein subunit (180 aa).

The N-terminal stretch at 1 to 22 (MKKVLLPLAALVLSATASNAMA) is a signal peptide. C38 and C78 form a disulfide bridge.

The protein belongs to the fimbrial protein family.

The protein resides in the fimbrium. In terms of biological role, fimbriae (also called pili), polar filaments radiating from the surface of the bacterium to a length of 0.5-1.5 micrometers and numbering 100-300 per cell, enable bacteria to colonize the epithelium of specific host organs. The sequence is that of Type-1 fimbrial protein subunit (fimA) from Serratia marcescens.